Consider the following 288-residue polypeptide: Syntaxin-1B (288 aa).

The segment covering 1–13 (MKDRTQELRSAKD) has biased composition (basic and acidic residues). Positions 1–20 (MKDRTQELRSAKDSDDEEEV) are disordered. Topologically, residues 1–264 (MKDRTQELRS…KYQSKARRKK (264 aa)) are cytoplasmic. Residues serine 10 and serine 14 each carry the phosphoserine modification. Residues 29 to 104 (MDEFFEQVEE…IEQSIEQEEG (76 aa)) are a coiled coil. The 63-residue stretch at 191-253 (LNEIETRHNE…ERAVSDTKKA (63 aa)) folds into the t-SNARE coiled-coil homology domain. A helical; Anchor for type IV membrane protein transmembrane segment spans residues 265-288 (IMIIICCVVLGVVLASSIGGTLGL).

It belongs to the syntaxin family. Interacts with OTOF. Interacts with SYT6 and SYT8; the interaction is Ca(2+)-dependent. Post-translationally, phosphorylated by CK2. (Microbial infection) Targeted and hydrolyzed by C.botulinum neurotoxin type C (BoNT/C); cleavage by BoNT/C inhibits neurotransmitter release. Probably hydrolyzes the 252-Lys-|-Ala-253 bond.

Its subcellular location is the membrane. Functionally, potentially involved in docking of synaptic vesicles at presynaptic active zones. May mediate Ca(2+)-regulation of exocytosis acrosomal reaction in sperm. This chain is Syntaxin-1B (STX1B), found in Bos taurus (Bovine).